Consider the following 605-residue polypeptide: Translation factor GUF1 homolog, chloroplastic (605 aa).

A tr-type G domain is found at 7–189 (RRIRNFSIIA…RIVQVVPPPR (183 aa)). GTP contacts are provided by residues 16–23 (AHIDHGKS), 82–86 (DTPGH), and 136–139 (NKID).

This sequence belongs to the TRAFAC class translation factor GTPase superfamily. Classic translation factor GTPase family. LepA subfamily.

It is found in the plastid. It localises to the chloroplast. The catalysed reaction is GTP + H2O = GDP + phosphate + H(+). In terms of biological role, promotes chloroplast protein synthesis. May act as a fidelity factor of the translation reaction, by catalyzing a one-codon backward translocation of tRNAs on improperly translocated ribosomes. This is Translation factor GUF1 homolog, chloroplastic from Ostreococcus lucimarinus (strain CCE9901).